Here is a 372-residue protein sequence, read N- to C-terminus: Glutamate 5-kinase (372 aa).

Lys14 lines the ATP pocket. The substrate site is built by Ser54, Asp141, and Asn153. ATP is bound by residues 173-174 and 215-221; these read TD and TGGMSTK. One can recognise a PUA domain in the interval 280-358; the sequence is QGSLVLDAGA…DEIESVLGYD (79 aa).

It belongs to the glutamate 5-kinase family.

The protein localises to the cytoplasm. It catalyses the reaction L-glutamate + ATP = L-glutamyl 5-phosphate + ADP. The protein operates within amino-acid biosynthesis; L-proline biosynthesis; L-glutamate 5-semialdehyde from L-glutamate: step 1/2. Catalyzes the transfer of a phosphate group to glutamate to form L-glutamate 5-phosphate. This is Glutamate 5-kinase from Shewanella oneidensis (strain ATCC 700550 / JCM 31522 / CIP 106686 / LMG 19005 / NCIMB 14063 / MR-1).